Consider the following 506-residue polypeptide: Exopolysaccharide phosphotransferase NFA_48680 (506 aa).

The disordered stretch occupies residues 484–506 (PAPWERVSAPSRRPLPESTAGAA).

This sequence belongs to the stealth family.

In Nocardia farcinica (strain IFM 10152), this protein is Exopolysaccharide phosphotransferase NFA_48680.